A 590-amino-acid polypeptide reads, in one-letter code: Polypeptide N-acetylgalactosaminyltransferase 8 (590 aa).

The Cytoplasmic segment spans residues 1–11 (MCLDIWRHKKK). Residues 12 to 31 (VLPLLLLMAIGSIIYYLYTL) traverse the membrane as a helical; Signal-anchor for type II membrane protein segment. Topologically, residues 32-590 (KLEGERDESA…QHFWDNVKTQ (559 aa)) are lumenal. Asparagine 77 carries N-linked (GlcNAc...) asparagine glycosylation. Intrachain disulfides connect cysteine 117/cysteine 345, cysteine 336/cysteine 419, cysteine 459/cysteine 475, cysteine 502/cysteine 517, and cysteine 546/cysteine 561. A catalytic subdomain A region spans residues 127-236 (LPSVSVVITY…KGWLEPLIAP (110 aa)). Aspartate 168 serves as a coordination point for substrate. Mn(2+) is bound at residue aspartate 220. Serine 221 is a binding site for substrate. Histidine 222 lines the Mn(2+) pocket. N-linked (GlcNAc...) asparagine glycosylation occurs at asparagine 241. The tract at residues 291-353 (PHKNPIMNGG…PCSRVGHLFR (63 aa)) is catalytic subdomain B. Tryptophan 322 provides a ligand contact to substrate. Histidine 350 is a Mn(2+) binding site. Arginine 353 provides a ligand contact to substrate. In terms of domain architecture, Ricin B-type lectin spans 446–573 (ASGVLQSISS…KNHKQQWKFG (128 aa)).

It belongs to the glycosyltransferase 2 family. GalNAc-T subfamily. Requires Mn(2+) as cofactor. In terms of tissue distribution, expressed in developing oocytes and egg chambers. During embryonic stages 9-11, expressed in the primordium of the foregut, midgut and hindgut. During embryonic stages 12-13, expressed in the posterior midgut and hindgut. During embryonic stages 14-15, expression continues in the hindgut. No expression detected during embryonic stages 16-17 or in third instar larvae imaginal disks.

The protein localises to the golgi apparatus membrane. It catalyses the reaction L-seryl-[protein] + UDP-N-acetyl-alpha-D-galactosamine = a 3-O-[N-acetyl-alpha-D-galactosaminyl]-L-seryl-[protein] + UDP + H(+). It carries out the reaction L-threonyl-[protein] + UDP-N-acetyl-alpha-D-galactosamine = a 3-O-[N-acetyl-alpha-D-galactosaminyl]-L-threonyl-[protein] + UDP + H(+). It functions in the pathway protein modification; protein glycosylation. In terms of biological role, catalyzes the initial reaction in O-linked oligosaccharide biosynthesis, the transfer of an N-acetyl-D-galactosamine residue to a serine or threonine residue on the protein receptor. It can both act as a peptide transferase that transfers GalNAc onto unmodified peptide substrates, and as a glycopeptide transferase that requires the prior addition of a GalNAc on a peptide before adding additional GalNAc moieties. Prefers both EA2 and the diglycosylated Muc5AC-3/13 as substrates, albeit at very low levels fro Muc5AC-3/13. The sequence is that of Polypeptide N-acetylgalactosaminyltransferase 8 from Drosophila melanogaster (Fruit fly).